The sequence spans 92 residues: C-C motif chemokine 3 (92 aa).

A signal peptide spans 1-23; the sequence is MQVSTAALAVLLCTMALCNQFSA. 2 disulfide bridges follow: cysteine 33–cysteine 57 and cysteine 34–cysteine 73.

It belongs to the intercrine beta (chemokine CC) family. Self-associates. Also heterodimer of MIP-1-alpha(4-69) and MIP-1-beta(3-69). Interacts with CCR1. Post-translationally, N-terminal processed form LD78-alpha(4-69) is produced by proteolytic cleavage after secretion from HTLV1-transformed T-cells.

The protein localises to the secreted. Monokine with inflammatory and chemokinetic properties. Binds to CCR1, CCR4 and CCR5. One of the major HIV-suppressive factors produced by CD8+ T-cells. Recombinant MIP-1-alpha induces a dose-dependent inhibition of different strains of HIV-1, HIV-2, and simian immunodeficiency virus (SIV). This is C-C motif chemokine 3 (CCL3) from Homo sapiens (Human).